A 318-amino-acid chain; its full sequence is Pheromone-regulated membrane protein 5 (318 aa).

The interval 15 to 56 (TTSTSSTTTASSSSTITSVXSSSSSLPLLSNSTSSSIIPSIT) is disordered. Residues 78–98 (FIVVGGIAGVIFLAILLWWVI) form a helical membrane-spanning segment. Serine 129 is modified (phosphoserine). Residues 238 to 247 (TISSSSASSL) are compositionally biased toward low complexity. Residues 238–318 (TISSSSASSL…HMLEGKEQDE (81 aa)) are disordered. Basic and acidic residues predominate over residues 250–261 (GNEKEVGEDIRK). Positions 276-285 (SPESDGSVNR) are enriched in polar residues. Phosphoserine is present on residues serine 279, serine 282, and serine 288. A compositionally biased stretch (basic and acidic residues) spans 309–318 (HMLEGKEQDE). Lysine 314 is covalently cross-linked (Glycyl lysine isopeptide (Lys-Gly) (interchain with G-Cter in ubiquitin)).

The protein belongs to the PRM5 family.

The protein localises to the membrane. This is Pheromone-regulated membrane protein 5 (PRM5) from Saccharomyces cerevisiae (strain Lalvin QA23) (Baker's yeast).